The primary structure comprises 365 residues: uncharacterized protein (365 aa).

This sequence belongs to the mycobacterial PPE family.

This is an uncharacterized protein from Mycobacterium tuberculosis (strain ATCC 25618 / H37Rv).